The sequence spans 507 residues: RNA-splicing ligase RtcB homolog (507 aa).

Residues Asp-121, Cys-124, His-229, His-261, and His-355 each coordinate Mn(2+). 228 to 232 (NHYAE) serves as a coordination point for GMP. GMP contacts are provided by residues 355 to 356 (HN), 404 to 407 (GGTM), Ser-411, 430 to 433 (HGAG), and Lys-506. The GMP-histidine intermediate role is filled by His-430.

It belongs to the RtcB family. Catalytic component of the tRNA-splicing ligase complex. The cofactor is Mn(2+).

It catalyses the reaction a 3'-end 3'-phospho-ribonucleotide-RNA + a 5'-end dephospho-ribonucleoside-RNA + GTP = a ribonucleotidyl-ribonucleotide-RNA + GMP + diphosphate. It carries out the reaction a 3'-end 2',3'-cyclophospho-ribonucleotide-RNA + a 5'-end dephospho-ribonucleoside-RNA + GTP + H2O = a ribonucleotidyl-ribonucleotide-RNA + GMP + diphosphate + H(+). Functionally, catalytic subunit of the tRNA-splicing ligase complex that acts by directly joining spliced tRNA halves to mature-sized tRNAs by incorporating the precursor-derived splice junction phosphate into the mature tRNA as a canonical 3',5'-phosphodiester. May act as an RNA ligase with broad substrate specificity, and may function toward other RNAs. The sequence is that of RNA-splicing ligase RtcB homolog from Micromonas pusilla (strain CCMP1545) (Picoplanktonic green alga).